The chain runs to 96 residues: Tenecin-3 (96 aa).

The N-terminal stretch at 1-18 (MKTFVICLILVVAVSAAP) is a signal peptide. The disordered stretch occupies residues 19 to 96 (DHHDGHLGGH…HQGGYKTHGH (78 aa)). 12 consecutive repeat copies span residues 23–26 (GHLG), 31–34 (GHQG), 35–38 (GQQG), 39–42 (GHLG), 43–46 (GQQG), 47–50 (GHLG), 51–54 (GHQG), 59–62 (GHLG), 63–66 (GHQG), 67–70 (GIGG), 77–80 (GQHG), and 86–89 (GHQG). The segment at 23–89 (GHLGGHQTGH…GPGTGAGHQG (67 aa)) is 12 X 4 AA repeats of G-X-X-G. Residues 26–89 (GGHQTGHQGG…GPGTGAGHQG (64 aa)) show a composition bias toward gly residues.

The protein to H.diomphalia holotricin 3.

It localises to the secreted. Antifungal heat stable protein produced in response to injury. It is active against C.albicans. No antibacterial activity against Gram-positive and Gram-negative bacteria. This chain is Tenecin-3, found in Tenebrio molitor (Yellow mealworm beetle).